The chain runs to 446 residues: Histidine--tRNA ligase (446 aa).

This sequence belongs to the class-II aminoacyl-tRNA synthetase family. In terms of assembly, homodimer.

It is found in the cytoplasm. The catalysed reaction is tRNA(His) + L-histidine + ATP = L-histidyl-tRNA(His) + AMP + diphosphate + H(+). The sequence is that of Histidine--tRNA ligase from Paraburkholderia phymatum (strain DSM 17167 / CIP 108236 / LMG 21445 / STM815) (Burkholderia phymatum).